A 99-amino-acid chain; its full sequence is uncharacterized protein (99 aa).

This is an uncharacterized protein from Caenorhabditis elegans.